The following is a 469-amino-acid chain: Cytochrome c biogenesis protein CcsB (469 aa).

3 helical membrane passes run 30–50 (LRLA…GTVI), 89–109 (TPWF…CSLT), and 175–195 (IGPI…IWGS).

The protein belongs to the Ccs1/CcsB family. May interact with CcsA.

It is found in the cellular thylakoid membrane. In terms of biological role, required during biogenesis of c-type cytochromes (cytochrome c6 and cytochrome f) at the step of heme attachment. The polypeptide is Cytochrome c biogenesis protein CcsB (Synechococcus sp. (strain JA-2-3B'a(2-13)) (Cyanobacteria bacterium Yellowstone B-Prime)).